The chain runs to 476 residues: Lactate utilization protein B (476 aa).

2 consecutive 4Fe-4S ferredoxin-type domains span residues 304 to 334 (GTEFQSVLQCIRCAACINVCPVYRHVGGHSY) and 353 to 382 (YDEYKELPYASSLCAACTEACPVKIPLHEL). [4Fe-4S] cluster is bound by residues Cys-313, Cys-316, Cys-319, Cys-323, Cys-366, Cys-369, and Cys-373.

This sequence belongs to the LutB/YkgF family.

Is involved in L-lactate degradation and allows cells to grow with lactate as the sole carbon source. Has probably a role as an electron transporter during oxidation of L-lactate. This Bacillus velezensis (strain DSM 23117 / BGSC 10A6 / LMG 26770 / FZB42) (Bacillus amyloliquefaciens subsp. plantarum) protein is Lactate utilization protein B.